The chain runs to 398 residues: 4-hydroxy-3-methylbut-2-en-1-yl diphosphate synthase (ferredoxin) (398 aa).

Residues Cys-306, Cys-309, Cys-340, and Glu-347 each contribute to the [4Fe-4S] cluster site.

Belongs to the IspG family. The cofactor is [4Fe-4S] cluster.

It catalyses the reaction (2E)-4-hydroxy-3-methylbut-2-enyl diphosphate + 2 oxidized [2Fe-2S]-[ferredoxin] + H2O = 2-C-methyl-D-erythritol 2,4-cyclic diphosphate + 2 reduced [2Fe-2S]-[ferredoxin] + H(+). Its pathway is isoprenoid biosynthesis; isopentenyl diphosphate biosynthesis via DXP pathway; isopentenyl diphosphate from 1-deoxy-D-xylulose 5-phosphate: step 5/6. Converts 2C-methyl-D-erythritol 2,4-cyclodiphosphate (ME-2,4cPP) into 1-hydroxy-2-methyl-2-(E)-butenyl 4-diphosphate. The polypeptide is 4-hydroxy-3-methylbut-2-en-1-yl diphosphate synthase (ferredoxin) (Parasynechococcus marenigrum (strain WH8102)).